Reading from the N-terminus, the 789-residue chain is Tax1-binding protein 1 (789 aa).

Phosphoserine occurs at positions 124, 138, and 225. Residues 144–599 adopt a coiled-coil conformation; sequence TTKAGLLELK…LKRSLENPAE (456 aa). The segment at 320 to 420 is oligomerization; the sequence is EEIGRLQLCL…ELKLNAMKKD (101 aa). A compositionally biased stretch (polar residues) spans 481 to 502; the sequence is TGNQQKVNDASVNTDPATSAST. A disordered region spans residues 481–508; the sequence is TGNQQKVNDASVNTDPATSASTVDVKPS. S593 is modified (phosphoserine; by IKKA). S609 is subject to Phosphoserine. The segment at 639–660 is disordered; that stretch reads YASQETRDGADGAFYPDEIQRP. A Phosphoserine; by IKKA modification is found at S666. The tract at residues 678–712 is disordered; the sequence is PARNFSRPDGLEDSEDSKEDENVPTAPDPPSQHLR. 2 UBZ1-type zinc fingers span residues 727 to 753 and 754 to 780; these read HKKC…VESH and WKVC…VQTH. C730, C733, H749, H753, C757, C760, H776, and H780 together coordinate Zn(2+).

In terms of assembly, homooligomer. Interacts with TNFAIP3. Interacts with STARD13. Interacts with MYO6. Interacts with TOM1; the interaction is indirect and is mediated by MYO6, which acts as a bridge between TOM1 and TAX1BP1. Interacts with MAVS; this interaction induces MAVS polyubiquitination. Interacts with TNIP1. Interacts with TRAF6; this interaction mediates deubiquitination of TRAF6 and inhibition of NF-kappa-B activation. Interacts with RIPK1; this interaction negatively regulates RIPK1 ubiquitination. Interacts with NBR1. Interacts with TBK1. Interacts with RB1CC1. Interacts with SQSTM1. Interacts with AZI2. Interacts with TICAM1 and TRIM32; these interactions target TICAM1 to TAX1BP1-mediated selective autophagic degradation. As to quaternary structure, (Microbial infection) Interacts with the HTLV-1 protein Tax. (Microbial infection) Interacts with Respiratory syncytial virus protein N; this interaction may promote viral growth by inhibiting the innate immune response. In terms of assembly, (Microbial infection) Interacts with Lassa virus protein Z. As to quaternary structure, (Microbial infection) Interacts with Mopeia virus protein Z. In terms of processing, phosphorylated in the C-terminal region by CHUK/IKKA leading to NF-kappa-B signaling down-regulation. In terms of tissue distribution, expressed in all tissues tested.

Its subcellular location is the cytoplasm. The protein localises to the mitochondrion. The protein resides in the preautophagosomal structure. It localises to the cytoplasmic vesicle. It is found in the autophagosome. Ubiquitin-binding adapter that participates in inflammatory, antiviral and innate immune processes as well as selective autophagy regulation. Plays a key role in the negative regulation of NF-kappa-B and IRF3 signalings by acting as an adapter for the ubiquitin-editing enzyme A20/TNFAIP3 to bind and inactivate its substrates. Disrupts the interactions between the E3 ubiquitin ligase TRAF3 and TBK1/IKBKE to attenuate 'Lys63'-linked polyubiquitination of TBK1 and thereby IFN-beta production. Also recruits A20/TNFAIP3 to ubiquitinated signaling proteins TRAF6 and RIPK1, leading to their deubiquitination and disruption of IL-1 and TNF-induced NF-kappa-B signaling pathways. Inhibits virus-induced apoptosis by inducing the 'Lys-48'-linked polyubiquitination and degradation of MAVS via recruitment of the E3 ligase ITCH, thereby attenuating MAVS-mediated apoptosis signaling. As a macroautophagy/autophagy receptor, facilitates the xenophagic clearance of pathogenic bacteria such as Salmonella typhimurium and Mycobacterium tuberculosis. Upon NBR1 recruitment to the SQSTM1-ubiquitin condensates, acts as the major recruiter of RB1CC1 to these ubiquitin condensates to promote their autophagic degradation. Mediates the autophagic degradation of other substrates including TICAM1. In Homo sapiens (Human), this protein is Tax1-binding protein 1 (TAX1BP1).